The following is a 137-amino-acid chain: Phosphoribosyl-ATP pyrophosphatase (137 aa).

Residues 114–124 (EGTSGIEEKAL) show a composition bias toward basic and acidic residues. The segment at 114–137 (EGTSGIEEKALRKSLQRAAEEAQP) is disordered.

It belongs to the PRA-PH family.

The protein localises to the cytoplasm. It catalyses the reaction 1-(5-phospho-beta-D-ribosyl)-ATP + H2O = 1-(5-phospho-beta-D-ribosyl)-5'-AMP + diphosphate + H(+). Its pathway is amino-acid biosynthesis; L-histidine biosynthesis; L-histidine from 5-phospho-alpha-D-ribose 1-diphosphate: step 2/9. The protein is Phosphoribosyl-ATP pyrophosphatase of Paracidovorax citrulli (strain AAC00-1) (Acidovorax citrulli).